A 351-amino-acid chain; its full sequence is Heme A synthase (351 aa).

The next 8 helical transmembrane spans lie at 17–37 (WLILMALMVYAIILVGGATRL), 103–123 (LIGLVAVAGFAFFAWRRWLGQ), 129–149 (LVGLIALGGLQGAIGWWMVSS), 164–184 (LMTHFTLALLILAVIAWLWLD), 201–221 (AMALMGLIFVQMAAGALVAGL), 261–281 (FNHRLLAYGLWAGSLAAAWAF), 289–309 (EFAFLAVLVSAQAVWGILTLV), and 316–336 (LALVHQGLGVVTTLWAVYTVW). His-263 provides a ligand contact to heme. Position 320 (His-320) interacts with heme.

It belongs to the COX15/CtaA family. Type 2 subfamily. In terms of assembly, interacts with CtaB. The cofactor is heme b.

Its subcellular location is the cell membrane. The enzyme catalyses Fe(II)-heme o + 2 A + H2O = Fe(II)-heme a + 2 AH2. The protein operates within porphyrin-containing compound metabolism; heme A biosynthesis; heme A from heme O: step 1/1. Catalyzes the conversion of heme O to heme A by two successive hydroxylations of the methyl group at C8. The first hydroxylation forms heme I, the second hydroxylation results in an unstable dihydroxymethyl group, which spontaneously dehydrates, resulting in the formyl group of heme A. The polypeptide is Heme A synthase (Hyphomonas neptunium (strain ATCC 15444)).